A 143-amino-acid polypeptide reads, in one-letter code: Transcriptional regulatory protein RosR (143 aa).

The C2H3-type zinc-finger motif lies at 79-97; the sequence is CLECGGNFKSLKRHLMTHH.

The protein belongs to the ros/MucR family.

This chain is Transcriptional regulatory protein RosR (rosR), found in Rhizobium etli (strain ATCC 51251 / DSM 11541 / JCM 21823 / NBRC 15573 / CFN 42).